The sequence spans 481 residues: Halobacterial transducer protein 9 (481 aa).

The PAS domain occupies 10–81 (SPFTVPLLLN…NKVADTPIDA (72 aa)). The Methyl-accepting transducer domain maps to 208-444 (DVERLEAASQ…EIAAMVDETA (237 aa)).

The protein belongs to the methyl-accepting chemotaxis (MCP) protein family.

It localises to the cytoplasm. In terms of biological role, potentially involved in chemo- or phototactic signal transduction. The polypeptide is Halobacterial transducer protein 9 (htr9) (Halobacterium salinarum (strain ATCC 700922 / JCM 11081 / NRC-1) (Halobacterium halobium)).